The sequence spans 376 residues: Chaperone protein DnaJ (376 aa).

One can recognise a J domain in the interval 5 to 70 (DYYEVLGVGR…DKKAAYDQFG (66 aa)). The CR-type zinc finger occupies 132–210 (GLTKELRIPT…CHGDGRVEKS (79 aa)). 8 residues coordinate Zn(2+): cysteine 145, cysteine 148, cysteine 162, cysteine 165, cysteine 184, cysteine 187, cysteine 198, and cysteine 201. 4 CXXCXGXG motif repeats span residues 145-152 (CDLCDGSG), 162-169 (CTTCHGQG), 184-191 (CPTCHGRG), and 198-205 (CTKCHGDG).

Belongs to the DnaJ family. In terms of assembly, homodimer. Requires Zn(2+) as cofactor.

It is found in the cytoplasm. Participates actively in the response to hyperosmotic and heat shock by preventing the aggregation of stress-denatured proteins and by disaggregating proteins, also in an autonomous, DnaK-independent fashion. Unfolded proteins bind initially to DnaJ; upon interaction with the DnaJ-bound protein, DnaK hydrolyzes its bound ATP, resulting in the formation of a stable complex. GrpE releases ADP from DnaK; ATP binding to DnaK triggers the release of the substrate protein, thus completing the reaction cycle. Several rounds of ATP-dependent interactions between DnaJ, DnaK and GrpE are required for fully efficient folding. Also involved, together with DnaK and GrpE, in the DNA replication of plasmids through activation of initiation proteins. This is Chaperone protein DnaJ from Shewanella putrefaciens (strain CN-32 / ATCC BAA-453).